The chain runs to 507 residues: MMTLKPGYLTLPQLRQIAREHVALQLDPASHAAIDACAQAVADIAAKGEPAYGINTGFGRLASTHIPHDQLELLQRNLVLSHAVGVGEPMSRPVVRLLIALKLSSLGRGHSGIRREVMEALITLYNADVLPVIPVKGSVGASGDLAPLAHMSATLLGVGEVFAKGERMPATEGLALVGLKPLTLQAKEGLALLNGTQASTALALYNMFAIEDLYRTALVSGALSVDAAMGSVKPFDARIHELRGHQGQIDAAGAYRSLLQGSGINVSHADCDKVQDPYSLRCQPQVMGACLDQMRHAANVLLLEANAVSDNPLIFPDTGEVLSGGNFHAEPVAFAADNLALAAAEIGALAERRIALLIDATLSGLPPFLVRDGGVNSGFMIAHVTAAALASENKTLAHPASVDSLPTSANQEDHVSMATFAARKLGDIAENTANILSIELLAAAQGVDLRAPHKTSPSLQKVMDAVRKDVAHYELDHYFAPDIAAVTRLVQDGTIAKLSPLSFASEQ.

A cross-link (5-imidazolinone (Ala-Gly)) is located at residues 141 to 143 (ASG). 2,3-didehydroalanine (Ser) is present on S142.

The protein belongs to the PAL/histidase family. Contains an active site 4-methylidene-imidazol-5-one (MIO), which is formed autocatalytically by cyclization and dehydration of residues Ala-Ser-Gly.

It is found in the cytoplasm. It carries out the reaction L-histidine = trans-urocanate + NH4(+). The protein operates within amino-acid degradation; L-histidine degradation into L-glutamate; N-formimidoyl-L-glutamate from L-histidine: step 1/3. The chain is Histidine ammonia-lyase from Paraburkholderia phytofirmans (strain DSM 17436 / LMG 22146 / PsJN) (Burkholderia phytofirmans).